Here is a 520-residue protein sequence, read N- to C-terminus: GMP synthase [glutamine-hydrolyzing] (520 aa).

A Glutamine amidotransferase type-1 domain is found at 9 to 202 (TVLIVDFGSQ…IHNIAGIKGD (194 aa)). Catalysis depends on Cys-86, which acts as the Nucleophile. Catalysis depends on residues His-176 and Glu-178. Positions 203 to 395 (WSMSAYRAKA…LGLPDSFIGR (193 aa)) constitute a GMPS ATP-PPase domain. Residue 230 to 236 (SGGVDSS) coordinates ATP.

As to quaternary structure, homodimer.

The catalysed reaction is XMP + L-glutamine + ATP + H2O = GMP + L-glutamate + AMP + diphosphate + 2 H(+). The protein operates within purine metabolism; GMP biosynthesis; GMP from XMP (L-Gln route): step 1/1. In terms of biological role, catalyzes the synthesis of GMP from XMP. The chain is GMP synthase [glutamine-hydrolyzing] from Rhizobium rhizogenes (strain K84 / ATCC BAA-868) (Agrobacterium radiobacter).